Consider the following 252-residue polypeptide: 3-dehydroquinate dehydratase (252 aa).

Residues Ser-21, 46–48, and Arg-82 each bind 3-dehydroquinate; that span reads EWR. His-143 functions as the Proton donor/acceptor in the catalytic mechanism. The Schiff-base intermediate with substrate role is filled by Lys-170. 3-dehydroquinate contacts are provided by Arg-213, Ser-232, and Gln-236.

This sequence belongs to the type-I 3-dehydroquinase family. In terms of assembly, homodimer.

The catalysed reaction is 3-dehydroquinate = 3-dehydroshikimate + H2O. The protein operates within metabolic intermediate biosynthesis; chorismate biosynthesis; chorismate from D-erythrose 4-phosphate and phosphoenolpyruvate: step 3/7. Involved in the third step of the chorismate pathway, which leads to the biosynthesis of aromatic amino acids. Catalyzes the cis-dehydration of 3-dehydroquinate (DHQ) and introduces the first double bond of the aromatic ring to yield 3-dehydroshikimate. The chain is 3-dehydroquinate dehydratase from Escherichia coli O9:H4 (strain HS).